A 255-amino-acid polypeptide reads, in one-letter code: Pyrroloquinoline-quinone synthase (255 aa).

The protein belongs to the PqqC family.

The enzyme catalyses 6-(2-amino-2-carboxyethyl)-7,8-dioxo-1,2,3,4,7,8-hexahydroquinoline-2,4-dicarboxylate + 3 O2 = pyrroloquinoline quinone + 2 H2O2 + 2 H2O + H(+). The protein operates within cofactor biosynthesis; pyrroloquinoline quinone biosynthesis. In terms of biological role, ring cyclization and eight-electron oxidation of 3a-(2-amino-2-carboxyethyl)-4,5-dioxo-4,5,6,7,8,9-hexahydroquinoline-7,9-dicarboxylic-acid to PQQ. The polypeptide is Pyrroloquinoline-quinone synthase (Cereibacter sphaeroides (strain ATCC 17023 / DSM 158 / JCM 6121 / CCUG 31486 / LMG 2827 / NBRC 12203 / NCIMB 8253 / ATH 2.4.1.) (Rhodobacter sphaeroides)).